Here is a 389-residue protein sequence, read N- to C-terminus: Phosphoribosylformylglycinamidine cyclo-ligase, chloroplastic (389 aa).

The transit peptide at 1-58 (MEARILQSSSSCYSSLYAVNRSRFSSVSSPKPFSVSFAQTTRTRTRVLSMSKKDGRTD) directs the protein to the chloroplast. The tract at residues 46–65 (RVLSMSKKDGRTDKDDDTDS) is disordered.

Belongs to the AIR synthase family.

Its subcellular location is the plastid. The protein resides in the chloroplast. It catalyses the reaction 2-formamido-N(1)-(5-O-phospho-beta-D-ribosyl)acetamidine + ATP = 5-amino-1-(5-phospho-beta-D-ribosyl)imidazole + ADP + phosphate + H(+). Its pathway is purine metabolism; IMP biosynthesis via de novo pathway; 5-amino-1-(5-phospho-D-ribosyl)imidazole from N(2)-formyl-N(1)-(5-phospho-D-ribosyl)glycinamide: step 2/2. This chain is Phosphoribosylformylglycinamidine cyclo-ligase, chloroplastic (PUR5), found in Arabidopsis thaliana (Mouse-ear cress).